Reading from the N-terminus, the 198-residue chain is Elongation factor Ts (198 aa).

Residues 82 to 85 (TDFV) are involved in Mg(2+) ion dislocation from EF-Tu.

Belongs to the EF-Ts family.

Its subcellular location is the cytoplasm. Associates with the EF-Tu.GDP complex and induces the exchange of GDP to GTP. It remains bound to the aminoacyl-tRNA.EF-Tu.GTP complex up to the GTP hydrolysis stage on the ribosome. The chain is Elongation factor Ts from Oleidesulfovibrio alaskensis (strain ATCC BAA-1058 / DSM 17464 / G20) (Desulfovibrio alaskensis).